The chain runs to 155 residues: Large ribosomal subunit protein bL17 (155 aa).

This sequence belongs to the bacterial ribosomal protein bL17 family. Part of the 50S ribosomal subunit. Contacts protein L32.

The chain is Large ribosomal subunit protein bL17 from Bifidobacterium adolescentis (strain ATCC 15703 / DSM 20083 / NCTC 11814 / E194a).